Consider the following 188-residue polypeptide: MEERNEQVVEEVKEAQVEEAVTPENSEETVEEKSEAALLQEKVDELQAKLTETEGRTLRLQADFENYKRRVQMDKQAAEKYRAQSLVSDILPALDNFERAMQVEATDEQTKSLLQGMEMVHRQLLEALNKEGVEVIEAVGKQFDPNEHQAIMQVEDSEFESNAVVEEFQKGYKLKDRVIRPSMVKVNQ.

Residues 1–16 show a composition bias toward basic and acidic residues; the sequence is MEERNEQVVEEVKEAQ. Residues 1 to 31 form a disordered region; the sequence is MEERNEQVVEEVKEAQVEEAVTPENSEETVE.

This sequence belongs to the GrpE family. Homodimer.

The protein resides in the cytoplasm. Functionally, participates actively in the response to hyperosmotic and heat shock by preventing the aggregation of stress-denatured proteins, in association with DnaK and GrpE. It is the nucleotide exchange factor for DnaK and may function as a thermosensor. Unfolded proteins bind initially to DnaJ; upon interaction with the DnaJ-bound protein, DnaK hydrolyzes its bound ATP, resulting in the formation of a stable complex. GrpE releases ADP from DnaK; ATP binding to DnaK triggers the release of the substrate protein, thus completing the reaction cycle. Several rounds of ATP-dependent interactions between DnaJ, DnaK and GrpE are required for fully efficient folding. In Bacillus anthracis, this protein is Protein GrpE.